A 535-amino-acid chain; its full sequence is MASLSLAPVNIFKAGADEERAETARLSSFIGAIAIGDLVKSTLGPKGMDKILLSSGRDASLMVTNDGATILKNIGVDNPAAKVLVDMSRVQDDEVGDGTTSVTVLAAELLREAESLIAKKIHPQTIIAGWREATKAAREALLSSAVDHGSDEVKFWQDLMNIAGTTLSSKLLTHHKDHFTKLAVEAVLRLKGSGNLEAIHVIKKLGGSLADSYLDEGFLLDKKIGVNQPKRIENAKILIANTGMDTDKIKIFGSRVRVDSTAKVAEIEHAEKEKMKEKVERILKHGINCFINRQLIYNYPEQLFGAAGVMAIEHADFAGVERLALVTGGEIASTFDHPELVKLGSCKLIEEVMIGEDKLIHFSGVALGEACTIVLRGATQQILDEAERSLHDALCVLAQTVKDPRTVYGGGCSEMLMAHAVTMLASRTPGKEAVAMESFAKALRMLPTIIADNAGYDSADLVAQLRAAHSEGRITAGLDMKEGSIGDMAVLGITESFQVKRQVLLSAAEAAEVILRVDNIIKAAPRKRVPDHHPC.

An N-acetylalanine modification is found at alanine 2. Serine 3 carries the phosphoserine modification. N6-acetyllysine is present on lysine 13. Glycine 44 is an ADP binding site. Glycine 44 is a binding site for ATP. Position 60 is a phosphoserine (serine 60). Residue aspartate 97 coordinates Mg(2+). Residues glycine 98, threonine 99, threonine 100, and serine 101 each coordinate ADP. Residues glycine 98, threonine 99, and threonine 100 each coordinate ATP. The residue at position 154 (lysine 154) is an N6-acetyllysine. Residues serine 168 and serine 169 each contribute to the ADP site. Residue lysine 181 is modified to N6-acetyllysine. Lysine 248 participates in a covalent cross-link: Glycyl lysine isopeptide (Lys-Gly) (interchain with G-Cter in SUMO2). A Phosphoserine modification is found at serine 260. Threonine 261 is subject to Phosphothreonine. ADP-binding residues include glycine 410, glutamate 495, and lysine 500. ATP is bound by residues glutamate 495 and lysine 500.

The protein belongs to the TCP-1 chaperonin family. As to quaternary structure, component of the chaperonin-containing T-complex (TRiC), a hexadecamer composed of two identical back-to-back stacked rings enclosing a protein folding chamber. Each ring is made up of eight different subunits: TCP1/CCT1, CCT2, CCT3, CCT4, CCT5, CCT6A/CCT6, CCT7, CCT8. Interacts with PACRG. Interacts with FLCN. Interacts with DLEC1. Interacts with SVEP1.

The protein localises to the cytoplasm. It carries out the reaction ATP + H2O = ADP + phosphate + H(+). In terms of biological role, component of the chaperonin-containing T-complex (TRiC), a molecular chaperone complex that assists the folding of actin, tubulin and other proteins upon ATP hydrolysis. The TRiC complex mediates the folding of WRAP53/TCAB1, thereby regulating telomere maintenance. As part of the TRiC complex may play a role in the assembly of BBSome, a complex involved in ciliogenesis regulating transports vesicles to the cilia. In Rattus norvegicus (Rat), this protein is T-complex protein 1 subunit beta (Cct2).